The primary structure comprises 83 residues: uncharacterized protein (83 aa).

This is an uncharacterized protein from Bacillus anthracis.